We begin with the raw amino-acid sequence, 585 residues long: Probable long-chain-fatty-acid--AMP ligase FadD30 (585 aa).

The protein belongs to the ATP-dependent AMP-binding enzyme family.

It functions in the pathway lipid metabolism; fatty acid biosynthesis. Its function is as follows. Catalyzes the activation of long-chain fatty acids as acyl-adenylates (acyl-AMP), which are then transferred to a multifunctional polyketide synthase (PKS) for further chain extension. This Mycobacterium tuberculosis (strain CDC 1551 / Oshkosh) protein is Probable long-chain-fatty-acid--AMP ligase FadD30 (fadD30).